A 351-amino-acid polypeptide reads, in one-letter code: tRNA-splicing endonuclease (351 aa).

Residues Tyr287, His298, and Lys329 contribute to the active site.

Belongs to the tRNA-intron endonuclease family. Archaeal long subfamily. As to quaternary structure, homodimer.

The enzyme catalyses pretRNA = a 3'-half-tRNA molecule with a 5'-OH end + a 5'-half-tRNA molecule with a 2',3'-cyclic phosphate end + an intron with a 2',3'-cyclic phosphate and a 5'-hydroxyl terminus.. Functionally, endonuclease that removes tRNA introns. Cleaves pre-tRNA at the 5'- and 3'-splice sites to release the intron. The products are an intron and two tRNA half-molecules bearing 2',3' cyclic phosphate and 5'-OH termini. Recognizes a pseudosymmetric substrate in which 2 bulged loops of 3 bases are separated by a stem of 4 bp. The sequence is that of tRNA-splicing endonuclease from Methanococcoides burtonii (strain DSM 6242 / NBRC 107633 / OCM 468 / ACE-M).